A 116-amino-acid polypeptide reads, in one-letter code: Protein Wnt-5a (116 aa).

Ser1 is lipidated: O-palmitoleoyl serine; by PORCN. Residues Asn69 and Asn83 are each glycosylated (N-linked (GlcNAc...) asparagine). Cys82 and Cys97 form a disulfide bridge.

This sequence belongs to the Wnt family. In terms of processing, palmitoleoylation is required for efficient binding to frizzled receptors. Depalmitoleoylation leads to Wnt signaling pathway inhibition.

Its subcellular location is the secreted. The protein localises to the extracellular space. The protein resides in the extracellular matrix. Ligand for members of the frizzled family of seven transmembrane receptors. Can activate or inhibit canonical Wnt signaling, depending on receptor context. Required during embryogenesis for extension of the primary anterior-posterior axis. This Meleagris gallopavo (Wild turkey) protein is Protein Wnt-5a (WNT5A).